A 147-amino-acid polypeptide reads, in one-letter code: MSPKFLLFSIIAVWSCAAAIEALFIQPRSLANFLSMTLTAAKRSPQEYDGYGNYCGWGGEGTPVDSIDRCCQVHDNCYGTVNENECGHYIRNVKLIDYDWHMEGTEIVCDPKDDACGRALCKCDKDIIDCFNENDKDYNPEYNKVIG.

A signal peptide spans 1 to 19 (MSPKFLLFSIIAVWSCAAA). Positions 20-28 (IEALFIQPR) are excised as a propeptide. Disulfide bonds link cysteine 55–cysteine 71, cysteine 70–cysteine 130, cysteine 77–cysteine 123, cysteine 86–cysteine 116, and cysteine 109–cysteine 121. Residues glycine 56 and glycine 58 each contribute to the Ca(2+) site. Histidine 74 is an active-site residue. Aspartate 75 contacts Ca(2+). Residue aspartate 124 is part of the active site.

Requires Ca(2+) as cofactor. Expressed by the venom gland.

The protein resides in the secreted. The catalysed reaction is a 1,2-diacyl-sn-glycero-3-phosphocholine + H2O = a 1-acyl-sn-glycero-3-phosphocholine + a fatty acid + H(+). In terms of biological role, PLA2 catalyzes the calcium-dependent hydrolysis of the 2-acyl groups in 3-sn-phosphoglycerides. The polypeptide is Phospholipase A2 SSD387 (Scolopendra dehaani (Thai centipede)).